The primary structure comprises 488 residues: MELFTIFSIVVSSLILFTFWSLKVPKNLPPGPPKLPIIGNIHLLDKIAPHRNLRNLARKYGPIMHLRLGQVSTVVISSPRLAHEIMKTQDLSFADRPTTTTSQIFFYKASNIAWARYGNYWRQMKKICTLELLSAKKSRSFFYIREEELTRTYKFLDFSSGTPITLRDTIQEMVNNVVSRATLGDVSEDRQFIIDSTYTMLKSFNSFNLFNYYPSLSFINVISGKQAQWLKMHKEVDVILEKILREHRSRPRGKNDHEDLVDVLIRIKETGDLDMAITDDNIKAIILEMLTAGTSSSSMTIEWAFTEMMRNPKIMKKAQTEVRSVVKGDRVTEADIQNLDYTKLVIKETLRLHGVPILVPRENQEDCVVNGYDIPAKTRLLVNAWACATDPDSWEDPDSFIPERFENNSIGYSGADFEFIPFGAGRRICPGMNFGMGTVEYVVANLLLHYDWKLPDGMKPHDIDMREITGISTLPIHPLKIVPISLSK.

Residues 2–22 traverse the membrane as a helical; Signal-anchor for type II membrane protein segment; sequence ELFTIFSIVVSSLILFTFWSL. An N-linked (GlcNAc...) asparagine glycan is attached at Asn407. Cys429 is a heme binding site.

It belongs to the cytochrome P450 family. Requires heme as cofactor. As to expression, expressed in leaf primordia.

It is found in the membrane. The catalysed reaction is germacra-1(10),4,11(13)-trien-12-oate + reduced [NADPH--hemoprotein reductase] + O2 = 8beta-hydroxygermacra-1(10),4,11(13)-trien-12-oate + oxidized [NADPH--hemoprotein reductase] + H2O + H(+). It participates in secondary metabolite biosynthesis; terpenoid biosynthesis. Its function is as follows. Involved in the biosynthesis of germacrene-derived sesquiterpene lactones. Hydroxylates germacrene A acid to 8-beta-hydroxy-germacrene A acid. Unlike 6-alpha-hydroxy-germacrene A acid, this compound cannot undergo spontaneous lactonization. The sequence is that of Germacrene A acid 8-beta-hydroxylase from Helianthus annuus (Common sunflower).